A 252-amino-acid chain; its full sequence is Ribosomal RNA small subunit methyltransferase J (252 aa).

Residues 101 to 102, 117 to 118, 153 to 154, and aspartate 171 contribute to the S-adenosyl-L-methionine site; these read RD, ER, and SS.

This sequence belongs to the methyltransferase superfamily. RsmJ family.

Its subcellular location is the cytoplasm. It carries out the reaction guanosine(1516) in 16S rRNA + S-adenosyl-L-methionine = N(2)-methylguanosine(1516) in 16S rRNA + S-adenosyl-L-homocysteine + H(+). In terms of biological role, specifically methylates the guanosine in position 1516 of 16S rRNA. The polypeptide is Ribosomal RNA small subunit methyltransferase J (Citrobacter koseri (strain ATCC BAA-895 / CDC 4225-83 / SGSC4696)).